The sequence spans 543 residues: Nucleoside-triphosphatase ntp-1 (543 aa).

Residues 40 to 60 form a helical membrane-spanning segment; sequence VYGFLLTCTCLLLILTIIPMS. The active-site Proton acceptor is glutamate 212. A helical transmembrane segment spans residues 497–517; the sequence is QISNFFSFFVILIIVLAVALY.

This sequence belongs to the GDA1/CD39 NTPase family.

Its subcellular location is the golgi apparatus membrane. The catalysed reaction is a ribonucleoside 5'-triphosphate + H2O = a ribonucleoside 5'-diphosphate + phosphate + H(+). Functionally, seems to be able to hydrolyze CTP, ATP and UTP. In Caenorhabditis elegans, this protein is Nucleoside-triphosphatase ntp-1.